Reading from the N-terminus, the 721-residue chain is MSDYSTGGPPPGPPPPAGGGGGAAGAGGGPPPGPPGAGDRGGGGPGGGGPGGGGASGGPSQPPGGGGPGIRKDAFADAVQRARQIAAKIGGDAATTVNNNTPDFGFGGQKRQLEDGDQPDSKKLASQGDSIGSQLGPIHPPPRTSMTEEYRVPDGMVGLIIGRGGEQINKIQQDSGCKVQISPDSGGLPERSVSLTGAPESVQKAKMMLDDIVSRGRGGPPGQFHDNANGGQNGTVQEIMIPAGKAGLVIGKGGETIKQLQERAGVKMILIQDGSQNTNVDKPLRIIGDPYKVQQACEMVMDILRERDQGGFGDRNEYGSRVGGGIDVPVPRHSVGVVIGRSGEMIKKIQNDAGVRIQFKQDDGTGPEKIAHIMGPPDRCEHAARIINDLLQSLRSGPPGPPGAPGMPPGGRGRGRGQGNWGPPGGEMTFSIPTHKCGLVIGRGGENVKAINQQTGAFVEISRQLPPNGDPNFKLFVIRGSPQQIDHAKQLIEEKIEGPLCPVGPGPGGPGPAGPMGPFHPGPFNQGPPGAPPHAGGPPPHQYPPQGWGNTYPEWQPPAPHDPNKAAAAATDPNAAWAAYYSHYYQQPPGPVPGPAPAPAAPPAQGEPPQPPPTGQSDYTKAWEEYYKKIGQQPQQPGAPPQQDYTKAWEEYYKKQAQVATGGGPGAPPGSQPDYSAAWAEYYRQQAAYYGQTPGPGGPQPPSTQQGQQQATEANGYELHL.

The tract at residues 1–148 (MSDYSTGGPP…HPPPRTSMTE (148 aa)) is disordered. Serine 2 carries the N-acetylserine modification. The span at 8-17 (GPPPGPPPPA) shows a compositional bias: pro residues. Composition is skewed to gly residues over residues 18-28 (GGGGGAAGAGG) and 36-69 (GAGD…GGPG). Arginine 40 is subject to Omega-N-methylarginine. N6-acetyllysine is present on lysine 88. The residue at position 101 (threonine 101) is a Phosphothreonine. Basic and acidic residues predominate over residues 111–123 (RQLEDGDQPDSKK). Residue lysine 122 forms a Glycyl lysine isopeptide (Lys-Gly) (interchain with G-Cter in SUMO1); alternate linkage. A Glycyl lysine isopeptide (Lys-Gly) (interchain with G-Cter in SUMO2); alternate cross-link involves residue lysine 122. Phosphoserine occurs at positions 126, 130, 182, 185, 194, and 275. KH domains are found at residues 145-209 (SMTE…KMML), 234-300 (GTVQ…CEMV), and 323-387 (GGGI…ARII). Residues 394 to 422 (LRSGPPGPPGAPGMPPGGRGRGRGQGNWG) form a disordered region. The span at 398–408 (PPGPPGAPGMP) shows a compositional bias: pro residues. The segment covering 409–422 (PGGRGRGRGQGNWG) has biased composition (gly residues). Omega-N-methylarginine occurs at positions 412, 414, 416, and 443. One can recognise a KH 4 domain in the interval 425-492 (GGEMTFSIPT…QQIDHAKQLI (68 aa)). The residue at position 481 (serine 481) is a Phosphoserine. The tract at residues 498–570 (GPLCPVGPGP…HDPNKAAAAA (73 aa)) is disordered. Composition is skewed to pro residues over residues 502–521 (PVGP…PFHP) and 529–543 (PGAP…PHQY). Repeat unit 1 spans residues 572–583 (DPNAAWAAYYSH). Positions 572 to 685 (DPNAAWAAYY…SAAWAEYYRQ (114 aa)) are 4 X 12 AA imperfect repeats. Pro residues predominate over residues 588 to 614 (PPGPVPGPAPAPAAPPAQGEPPQPPPT). 3 disordered regions span residues 588 to 650 (PPGP…KAWE), 659 to 678 (VATG…YSAA), and 688 to 721 (AYYG…ELHL). 3 consecutive repeat copies span residues 618–629 (DYTKAWEEYYKK), 644–655 (DYTKAWEEYYKK), and 674–685 (DYSAAWAEYYRQ).

Belongs to the KHSRP family. Part of a ternary complex containing FUBP2, PTBP1, PTBP2 and HNRPH1. Interacts with PARN. Interacts with PQBP1.

The protein resides in the nucleus. It localises to the cytoplasm. In terms of biological role, part of a ternary complex that binds to the downstream control sequence (DCS) of the pre-mRNA. Mediates exon inclusion in transcripts that are subject to tissue-specific alternative splicing. May interact with single-stranded DNA from the far-upstream element (FUSE). May activate gene expression. Also involved in degradation of inherently unstable mRNAs that contain AU-rich elements (AREs) in their 3'-UTR, possibly by recruiting degradation machinery to ARE-containing mRNAs. Binds to the dendritic targeting element and may play a role in mRNA trafficking. This is Far upstream element-binding protein 2 (Khsrp) from Rattus norvegicus (Rat).